The chain runs to 335 residues: Nucleoid-associated protein CKO_00588 (335 aa).

The protein belongs to the YejK family.

The protein localises to the cytoplasm. Its subcellular location is the nucleoid. This Citrobacter koseri (strain ATCC BAA-895 / CDC 4225-83 / SGSC4696) protein is Nucleoid-associated protein CKO_00588.